Here is a 415-residue protein sequence, read N- to C-terminus: Serine hydroxymethyltransferase 2 (415 aa).

Residues Leu122 and 126–128 contribute to the (6S)-5,6,7,8-tetrahydrofolate site; that span reads GHL. Position 230 is an N6-(pyridoxal phosphate)lysine (Lys230).

The protein belongs to the SHMT family. As to quaternary structure, homodimer. Requires pyridoxal 5'-phosphate as cofactor.

The protein localises to the cytoplasm. It carries out the reaction (6R)-5,10-methylene-5,6,7,8-tetrahydrofolate + glycine + H2O = (6S)-5,6,7,8-tetrahydrofolate + L-serine. The protein operates within one-carbon metabolism; tetrahydrofolate interconversion. It functions in the pathway amino-acid biosynthesis; glycine biosynthesis; glycine from L-serine: step 1/1. Its function is as follows. Catalyzes the reversible interconversion of serine and glycine with tetrahydrofolate (THF) serving as the one-carbon carrier. This reaction serves as the major source of one-carbon groups required for the biosynthesis of purines, thymidylate, methionine, and other important biomolecules. Also exhibits THF-independent aldolase activity toward beta-hydroxyamino acids, producing glycine and aldehydes, via a retro-aldol mechanism. The polypeptide is Serine hydroxymethyltransferase 2 (Burkholderia lata (strain ATCC 17760 / DSM 23089 / LMG 22485 / NCIMB 9086 / R18194 / 383)).